The primary structure comprises 427 residues: Glutamate-1-semialdehyde 2,1-aminomutase (427 aa).

Lys264 is modified (N6-(pyridoxal phosphate)lysine).

This sequence belongs to the class-III pyridoxal-phosphate-dependent aminotransferase family. HemL subfamily. As to quaternary structure, homodimer. The cofactor is pyridoxal 5'-phosphate.

The protein localises to the cytoplasm. It catalyses the reaction (S)-4-amino-5-oxopentanoate = 5-aminolevulinate. It functions in the pathway porphyrin-containing compound metabolism; protoporphyrin-IX biosynthesis; 5-aminolevulinate from L-glutamyl-tRNA(Glu): step 2/2. The chain is Glutamate-1-semialdehyde 2,1-aminomutase from Campylobacter concisus (strain 13826).